The sequence spans 81 residues: Exodeoxyribonuclease 7 small subunit (81 aa).

This sequence belongs to the XseB family. Heterooligomer composed of large and small subunits.

Its subcellular location is the cytoplasm. It catalyses the reaction Exonucleolytic cleavage in either 5'- to 3'- or 3'- to 5'-direction to yield nucleoside 5'-phosphates.. Functionally, bidirectionally degrades single-stranded DNA into large acid-insoluble oligonucleotides, which are then degraded further into small acid-soluble oligonucleotides. The protein is Exodeoxyribonuclease 7 small subunit of Pseudomonas syringae pv. syringae (strain B728a).